Reading from the N-terminus, the 322-residue chain is RING finger protein 113B (322 aa).

The tract at residues 24–92 is disordered; it reads KPGRKGAAGL…EEAAPESLDV (69 aa). Low complexity predominate over residues 46–60; that stretch reads SSSSGDEGDTVAQPP. Residues 190–218 form a C3H1-type zinc finger; sequence DYQPDICKDYKETGFCGFGDSCKFLHDRS. The RING-type zinc-finger motif lies at 256 to 294; it reads CFICRQAFQNPVVTKCRHYFCESCALEHFRATPRCYICD.

The chain is RING finger protein 113B (RNF113B) from Homo sapiens (Human).